Reading from the N-terminus, the 646-residue chain is Phosphomethylpyrimidine synthase (646 aa).

Residues 1-13 (MNIRSNPDTTRPA) are compositionally biased toward polar residues. The interval 1–30 (MNIRSNPDTTRPAVTTGALPSSRKMFSAPD) is disordered. Substrate-binding positions include N221, M250, Y279, H315, 335–337 (SRG), 376–379 (DGLR), and E415. H419 lines the Zn(2+) pocket. Y442 contacts substrate. H483 contacts Zn(2+). C563, C566, and C571 together coordinate [4Fe-4S] cluster.

It belongs to the ThiC family. Homodimer. Requires [4Fe-4S] cluster as cofactor.

It carries out the reaction 5-amino-1-(5-phospho-beta-D-ribosyl)imidazole + S-adenosyl-L-methionine = 4-amino-2-methyl-5-(phosphooxymethyl)pyrimidine + CO + 5'-deoxyadenosine + formate + L-methionine + 3 H(+). Its pathway is cofactor biosynthesis; thiamine diphosphate biosynthesis. Its function is as follows. Catalyzes the synthesis of the hydroxymethylpyrimidine phosphate (HMP-P) moiety of thiamine from aminoimidazole ribotide (AIR) in a radical S-adenosyl-L-methionine (SAM)-dependent reaction. The chain is Phosphomethylpyrimidine synthase from Nitrobacter winogradskyi (strain ATCC 25391 / DSM 10237 / CIP 104748 / NCIMB 11846 / Nb-255).